The following is a 310-amino-acid chain: Porphobilinogen deaminase (310 aa).

S-(dipyrrolylmethanemethyl)cysteine is present on cysteine 240.

The protein belongs to the HMBS family. Monomer. Requires dipyrromethane as cofactor.

It catalyses the reaction 4 porphobilinogen + H2O = hydroxymethylbilane + 4 NH4(+). It participates in porphyrin-containing compound metabolism; protoporphyrin-IX biosynthesis; coproporphyrinogen-III from 5-aminolevulinate: step 2/4. Functionally, tetrapolymerization of the monopyrrole PBG into the hydroxymethylbilane pre-uroporphyrinogen in several discrete steps. This chain is Porphobilinogen deaminase, found in Desulfosudis oleivorans (strain DSM 6200 / JCM 39069 / Hxd3) (Desulfococcus oleovorans).